Reading from the N-terminus, the 57-residue chain is MAVPKKRTSKSKKNLRKNTWKKKVLKRAMRALFIAKLDLNNLQDNVATLEDSNETSS.

A disordered region spans residues 1–21 (MAVPKKRTSKSKKNLRKNTWK).

The protein belongs to the bacterial ribosomal protein bL32 family.

Its subcellular location is the plastid. The protein localises to the chloroplast. This is Large ribosomal subunit protein bL32c from Stigeoclonium helveticum (Green alga).